Reading from the N-terminus, the 267-residue chain is MEVKIKQVDEVKISRYIIKETMEDWYQFVESDVVIVGAGPSGLSAAYYLAKAGLKTLVFERRLSFGGGIGGGAMLFHKLIIEKPADEILREVNIRLKEVEEGVYVVDSAEFMAKLATAAIDAGAKIIHGVTVDDVIFRENPLRVAGVAVEWTATQMASLHVDPIFISAKAVVDATGHDAEVISVAARKIPELGIVIPGEKSAYSERAEELTVINTGKVAEGLYATGMAVTEVKGLPRMGPIFGAMVLSGKAVAGEITKDLLKSEIRA.

Residues serine 41, 60–61 (ER), glycine 68, valine 132, and 160–162 (HVD) contribute to the NAD(+) site. Fe cation is bound by residues aspartate 162 and histidine 177. Residue methionine 227 coordinates NAD(+). Arginine 237 is a binding site for glycine.

Belongs to the THI4 family. Homooctamer; tetramer of dimers. Fe(2+) serves as cofactor.

The enzyme catalyses hydrogen sulfide + glycine + NAD(+) = ADP-5-ethyl-4-methylthiazole-2-carboxylate + nicotinamide + 3 H2O + H(+). It functions in the pathway cofactor biosynthesis; thiamine diphosphate biosynthesis. In terms of biological role, involved in the biosynthesis of the thiazole moiety of thiamine. Catalyzes the conversion of NAD and glycine to adenosine diphosphate 5-(2-hydroxyethyl)-4-methylthiazole-2-carboxylate (ADT), an adenylated thiazole intermediate, using free sulfide as a source of sulfur. The polypeptide is Thiamine thiazole synthase (Saccharolobus solfataricus (strain ATCC 35092 / DSM 1617 / JCM 11322 / P2) (Sulfolobus solfataricus)).